Reading from the N-terminus, the 210-residue chain is Noranthrone monooxygenase (210 aa).

4 consecutive transmembrane segments (helical) span residues 59-79 (TGSF…PILI), 105-125 (GIAL…YSVG), 131-151 (WMVA…FMNA), and 188-208 (VRAL…CGVV).

Belongs to the anthrone oxygenase family.

Its subcellular location is the membrane. It carries out the reaction noranthrone + O2 = norsolorinic acid + H2O. Its pathway is mycotoxin biosynthesis; aflatoxin biosynthesis. Its function is as follows. Monooxygenase that converts norsolorinic acid anthrone to norsolorinic acid during aflatoxin biosynthesis. The chain is Noranthrone monooxygenase (hypC) from Aspergillus flavus (strain ATCC 200026 / FGSC A1120 / IAM 13836 / NRRL 3357 / JCM 12722 / SRRC 167).